A 154-amino-acid polypeptide reads, in one-letter code: 6,7-dimethyl-8-ribityllumazine synthase (154 aa).

Residues Phe-22, 56 to 58 (AFE), and 80 to 82 (TVI) contribute to the 5-amino-6-(D-ribitylamino)uracil site. Position 85-86 (85-86 (AT)) interacts with (2S)-2-hydroxy-3-oxobutyl phosphate. The Proton donor role is filled by His-88. A 5-amino-6-(D-ribitylamino)uracil-binding site is contributed by Phe-113. A (2S)-2-hydroxy-3-oxobutyl phosphate-binding site is contributed by Arg-127.

The protein belongs to the DMRL synthase family. In terms of assembly, forms an icosahedral capsid composed of 60 subunits, arranged as a dodecamer of pentamers.

The catalysed reaction is (2S)-2-hydroxy-3-oxobutyl phosphate + 5-amino-6-(D-ribitylamino)uracil = 6,7-dimethyl-8-(1-D-ribityl)lumazine + phosphate + 2 H2O + H(+). The protein operates within cofactor biosynthesis; riboflavin biosynthesis; riboflavin from 2-hydroxy-3-oxobutyl phosphate and 5-amino-6-(D-ribitylamino)uracil: step 1/2. Its function is as follows. Catalyzes the formation of 6,7-dimethyl-8-ribityllumazine by condensation of 5-amino-6-(D-ribitylamino)uracil with 3,4-dihydroxy-2-butanone 4-phosphate. This is the penultimate step in the biosynthesis of riboflavin. In Bacillus pumilus (strain SAFR-032), this protein is 6,7-dimethyl-8-ribityllumazine synthase.